A 252-amino-acid polypeptide reads, in one-letter code: Probable transcriptional regulatory protein Moth_1704 (252 aa).

It belongs to the TACO1 family.

Its subcellular location is the cytoplasm. The protein is Probable transcriptional regulatory protein Moth_1704 of Moorella thermoacetica (strain ATCC 39073 / JCM 9320).